A 419-amino-acid chain; its full sequence is Dual specificity protein phosphatase 7 (419 aa).

A disordered region spans residues 1-41 (MKNQLRGPPVRAHMSTSGAAAAGGTRAGSEPGAGSGSSAGI). The span at 15-30 (STSGAAAAGGTRAGSE) shows a compositional bias: low complexity. The segment covering 31-41 (PGAGSGSSAGI) has biased composition (gly residues). The Rhodanese domain maps to 68–187 (GGASLLLLDC…FQTEYSEHCE (120 aa)). The disordered stretch occupies residues 216-240 (CSDGESDRELPSSATESDGSPVPSS). The segment covering 227 to 240 (SSATESDGSPVPSS) has biased composition (polar residues). The 144-residue stretch at 244–387 (FPVQILPYLY…LLDFERTLGL (144 aa)) folds into the Tyrosine-protein phosphatase domain. The Phosphocysteine intermediate role is filled by Cys-331. 331 to 337 (CLAGISR) provides a ligand contact to substrate.

This sequence belongs to the protein-tyrosine phosphatase family. Non-receptor class dual specificity subfamily. In terms of assembly, interacts with MAPK1/ERK2; the interaction enhances DUSP7 phosphatase activity.

Its subcellular location is the cytoplasm. The enzyme catalyses O-phospho-L-tyrosyl-[protein] + H2O = L-tyrosyl-[protein] + phosphate. The catalysed reaction is O-phospho-L-seryl-[protein] + H2O = L-seryl-[protein] + phosphate. It catalyses the reaction O-phospho-L-threonyl-[protein] + H2O = L-threonyl-[protein] + phosphate. With respect to regulation, strongly inhibited by sodium orthovanadate. Dual specificity protein phosphatase. Shows high activity towards MAPK1/ERK2. Also has lower activity towards MAPK14 and MAPK8. In arrested oocytes, plays a role in meiotic resumption. Promotes nuclear envelope breakdown and activation of the CDK1/Cyclin-B complex in oocytes, probably by dephosphorylating and inactivating the conventional protein kinase C (cPKC) isozyme PRKCB. May also inactivate PRKCA and/or PRKCG. Also important in oocytes for normal chromosome alignment on the metaphase plate and progression to anaphase, where it might regulate activity of the spindle-assembly checkpoint (SAC) complex. The chain is Dual specificity protein phosphatase 7 from Rattus norvegicus (Rat).